The following is a 445-amino-acid chain: GTPase Der (445 aa).

2 consecutive EngA-type G domains span residues 3–167 and 180–353; these read PVIA…YAGQ and VKIA…AAAM. GTP contacts are provided by residues 9–16, 56–60, 119–122, 186–193, 233–237, and 298–301; these read GRPNVGKS, DTGGF, NKAE, DTAGL, and NKWD. The KH-like domain occupies 354–438; it reads AKLPTPKLTR…PLRIEFRSST (85 aa).

Belongs to the TRAFAC class TrmE-Era-EngA-EngB-Septin-like GTPase superfamily. EngA (Der) GTPase family. In terms of assembly, associates with the 50S ribosomal subunit.

Its function is as follows. GTPase that plays an essential role in the late steps of ribosome biogenesis. This Paraburkholderia phytofirmans (strain DSM 17436 / LMG 22146 / PsJN) (Burkholderia phytofirmans) protein is GTPase Der.